The chain runs to 62 residues: U10-hottentoxin-Hj3a (62 aa).

The signal sequence occupies residues 1 to 22; it reads MQKLLIILILFCILKFNVDVEG. Cystine bridges form between Cys-28–Cys-46, Cys-33–Cys-59, and Cys-37–Cys-61.

This sequence belongs to the short scorpion toxin superfamily. Potassium channel inhibitor family. Alpha-KTx 23 subfamily. Expressed by the venom gland.

The protein localises to the secreted. Its function is as follows. May block potassium channels. The sequence is that of U10-hottentoxin-Hj3a from Hottentotta judaicus (Black scorpion).